We begin with the raw amino-acid sequence, 382 residues long: MIKKEMLAMILAGGQGTRLKILTKNNAKPAVPFGGKYRIIDFTLSNCSNSGIDTIGVLTQYEPHILNSHIGIGSPWDLDRKRGGVSILPPHMRNDGGNWYMGTADAIYQNIMFIDKYDPEYILVLSGDHIYKMDYSKMLQFHKEKNSDATIAVIDVPIEEASRFGIMNTNDDDKIYEFEEKPEQPKNNKASMGIYIFNWKILKEFLIEDSELEDSDHDFGKNIIPSLLDSGYNLYAYSFNGYWKDVGTIESLWQANMDLLDTKNPLDIYNKNWKIYSVSPSKPPQYTGPNAIIQNSLVVEGCAVFGKIQNSVLFPEVEVGSNSIIQDSVIMSNVKIGQNVIIRKCIIGSNTIIENNSVIGNSDDITVIGDGEKIKTNSIIKN.

Residues Tyr-100, Gly-165, 180–181 (EK), and Ser-191 contribute to the alpha-D-glucose 1-phosphate site.

The protein belongs to the bacterial/plant glucose-1-phosphate adenylyltransferase family. Homotetramer.

The enzyme catalyses alpha-D-glucose 1-phosphate + ATP + H(+) = ADP-alpha-D-glucose + diphosphate. It participates in glycan biosynthesis; glycogen biosynthesis. In terms of biological role, involved in the biosynthesis of ADP-glucose, a building block required for the elongation reactions to produce glycogen. Catalyzes the reaction between ATP and alpha-D-glucose 1-phosphate (G1P) to produce pyrophosphate and ADP-Glc. This Clostridium novyi (strain NT) protein is Glucose-1-phosphate adenylyltransferase.